Consider the following 334-residue polypeptide: Lipoyl synthase (334 aa).

Residues cysteine 71, cysteine 76, cysteine 82, cysteine 97, cysteine 101, cysteine 104, and serine 312 each coordinate [4Fe-4S] cluster. Residues 83-301 form the Radical SAM core domain; it reads WSHGTATFMV…RQEGLRRGFR (219 aa).

The protein belongs to the radical SAM superfamily. Lipoyl synthase family. The cofactor is [4Fe-4S] cluster.

The protein resides in the cytoplasm. It catalyses the reaction [[Fe-S] cluster scaffold protein carrying a second [4Fe-4S](2+) cluster] + N(6)-octanoyl-L-lysyl-[protein] + 2 oxidized [2Fe-2S]-[ferredoxin] + 2 S-adenosyl-L-methionine + 4 H(+) = [[Fe-S] cluster scaffold protein] + N(6)-[(R)-dihydrolipoyl]-L-lysyl-[protein] + 4 Fe(3+) + 2 hydrogen sulfide + 2 5'-deoxyadenosine + 2 L-methionine + 2 reduced [2Fe-2S]-[ferredoxin]. It participates in protein modification; protein lipoylation via endogenous pathway; protein N(6)-(lipoyl)lysine from octanoyl-[acyl-carrier-protein]: step 2/2. In terms of biological role, catalyzes the radical-mediated insertion of two sulfur atoms into the C-6 and C-8 positions of the octanoyl moiety bound to the lipoyl domains of lipoate-dependent enzymes, thereby converting the octanoylated domains into lipoylated derivatives. This is Lipoyl synthase from Halorhodospira halophila (strain DSM 244 / SL1) (Ectothiorhodospira halophila (strain DSM 244 / SL1)).